The following is a 350-amino-acid chain: MSKNKLSKGQQRRVQANHQRRLRTDRKPELDDSQLGDAQEGIVISRFGQHADVEAVDGTQHRCNIRRTIKSLVTGDRVVWRPGLQAQEGVRVKGIVEAVHERTSVLTRPDLYDGVKPIAANIDQIVIVSAILPELSLNIIDRYLVACETLEVEPLIVLNKIDLLDADGRKFVDGMMDIYRRIGYDVLEVSSQTREGMEAFENALTGRISIFAGQSGVGKSSLLNALLPPTDNEILVNTVSGNSGLGQHTTTAARLYHFQHGGDVIDSPGVREFGLWHLAPEQITQGFVEFRDYLGHCKFRDCSHTNDPGCALREAVEQGKIAEERFDNYHRILESMEQAKPRKTSDSDEK.

The segment covering 1–17 (MSKNKLSKGQQRRVQAN) has biased composition (polar residues). Residues 1 to 35 (MSKNKLSKGQQRRVQANHQRRLRTDRKPELDDSQL) form a disordered region. One can recognise a CP-type G domain in the interval 103 to 273 (TSVLTRPDLY…VIDSPGVREF (171 aa)). GTP-binding positions include 159–162 (NKID) and 213–221 (GQSGVGKSS). Residues Cys-297, Cys-302, His-304, and Cys-310 each contribute to the Zn(2+) site.

It belongs to the TRAFAC class YlqF/YawG GTPase family. RsgA subfamily. In terms of assembly, monomer. Associates with 30S ribosomal subunit, binds 16S rRNA. Zn(2+) is required as a cofactor.

It is found in the cytoplasm. Its function is as follows. One of several proteins that assist in the late maturation steps of the functional core of the 30S ribosomal subunit. Helps release RbfA from mature subunits. May play a role in the assembly of ribosomal proteins into the subunit. Circularly permuted GTPase that catalyzes slow GTP hydrolysis, GTPase activity is stimulated by the 30S ribosomal subunit. In Yersinia pseudotuberculosis serotype O:1b (strain IP 31758), this protein is Small ribosomal subunit biogenesis GTPase RsgA.